Reading from the N-terminus, the 266-residue chain is Exosome complex component Rrp42 (266 aa).

It belongs to the RNase PH family. Rrp42 subfamily. As to quaternary structure, component of the archaeal exosome complex. Forms a hexameric ring-like arrangement composed of 3 Rrp41-Rrp42 heterodimers. The hexameric ring associates with a trimer of Rrp4 and/or Csl4 subunits.

It is found in the cytoplasm. Its function is as follows. Non-catalytic component of the exosome, which is a complex involved in RNA degradation. Contributes to the structuring of the Rrp41 active site. The protein is Exosome complex component Rrp42 of Methanosarcina mazei (strain ATCC BAA-159 / DSM 3647 / Goe1 / Go1 / JCM 11833 / OCM 88) (Methanosarcina frisia).